Consider the following 1488-residue polypeptide: MIERGKFRSLTLINWNGFFARTFDLDELVTTLSGGNGAGKSTTMAAFVTALIPDLTLLHFRNTTEAGATSGSRDKGLHGKLKAGVCYSMLDTINSRHQRVVVGVRLQQVAGRDRKVDIKPFAIQGLPMSVQPTQLVTETLNERQARVLSLAELKDKLDEMEGVQFKQFNSITDYHSLMFDLGIIARRLRSASDRSKFYRLIEASLYGGISSAITRSLRDYLLPENSGVRKAFQDMEAALRENRLTLEAIRVTQSDRDLFKHLISEATDYVAADYMRHANERRVHLDQALAFRRELYTSRKQLAAEQYKHVDMARELGEHNGAEGSLEADYQAASDHLNLVQTALRQQEKIERYEADLEELQIRLEEQNEVVAEAAEMQDENEARAEAAELEVDELKSQLADYQQALDVQQTRAIQYNQAISALARAKELCHLPDLTPESAAEWLDTFQAKEQEATEKLLSLEQKMSVAQTAHSQFEQAYQLVAAINGPLARSEAWDVARELLRDGVNQRHLAEQVQPLRMRLSELEQRLREQQEAERLLAEFCKRQGKNFDIDELEALHQELEARIASLSDSVSSASEQRMALRQEQEQLQSRIQHLMRRAPVWLAAQNSLNQLSEQCGEEFTSSQEVTEYLQQLLEREREAIVERDEVGARKNAVDEEIERLSQPGGAEDQRLNALAERFGGVLLSEIYDDVSLEDAPYFSALYGPSRHAIVVPDLSQIAEQLEGLTDCPEDLYLIEGDPQSFDDSVFSVDELEKAVVVKIADRQWRYSRFPSLPIFGRAARENRIESLHAEREVLSERFATLSFDVQKTQRLHQAFSRFIGSHLSVAFEDDPEAEIRRLNGRRVELERALATHENDNQQQRLQFEQAKEGVSALNRLLPRLNLLADETLADRVDEIQERLDEAQEAARFVQQYGNQLAKLEPVVSVLQSDPEQFEQLKEDYAWSQQMQRDARQQAFALAEVVERRAHFSYSDSAEMLSGNSDLNEKLRQRLEQAEAERTRAREALRSHAAQLSQYSQVLASLKSSYDTKKELLNDLQRELQDIGVRADSGAEERARQRRDELHAQLSNNRSRRNQLEKALTFCEAEMENLTRKLRKLERDYHEMREQVVTAKAGWCAVMRMVKDNGVERRLHRRELAYLSADELRSMSDKALGALRLAVADNEHLRDVLRLSEDPKRPERKIQFFVAVYQHLRERIRQDIIRTDDPVEAIEQMEIELSRLTEELTSREQKLAISSRSVANIIRKTIQREQNRIRMLNQGLQSVSFGQVNSVRLNVNVRETHATLLDVLSEQQEQHQDLFNSNRLTFSEALAKLYQRLNPQIDMGQRTPQTIGEELLDYRNYLEMEVEVNRGSDGWLRAESGALSTGEAIGTGMSILVMVVQSWEDEARRLRGKDISPCRLLFLDEAARLDARSIATLFELCERLQMQLIIAAPENISPEKGTTYKLVRKVFQNTEHVHVVGLRGFAPQLPETLPGTQTEDTPSEAS.

34–41 is an ATP binding site; it reads GGNGAGKS. Coiled coils occupy residues 326-418, 444-472, and 509-602; these read LEAD…QYNQ, LDTF…QTAH, and RHLA…RRAP. A flexible hinge region spans residues 666–783; sequence PGGAEDQRLN…SLPIFGRAAR (118 aa). Coiled-coil stretches lie at residues 835–923, 977–1116, and 1209–1265; these read EAEI…AKLE, EMLS…AKAG, and VEAI…LQSV. Residues 1049-1074 are disordered; the sequence is ADSGAEERARQRRDELHAQLSNNRSR. Over residues 1051-1065 the composition is skewed to basic and acidic residues; sequence SGAEERARQRRDELH.

Belongs to the SMC family. MukB subfamily. As to quaternary structure, homodimerization via its hinge domain. Binds to DNA via its C-terminal region. Interacts, and probably forms a ternary complex, with MukE and MukF via its C-terminal region. The complex formation is stimulated by calcium or magnesium. Interacts with tubulin-related protein FtsZ.

Its subcellular location is the cytoplasm. It localises to the nucleoid. Its function is as follows. Plays a central role in chromosome condensation, segregation and cell cycle progression. Functions as a homodimer, which is essential for chromosome partition. Involved in negative DNA supercoiling in vivo, and by this means organize and compact chromosomes. May achieve or facilitate chromosome segregation by condensation DNA from both sides of a centrally located replisome during cell division. The sequence is that of Chromosome partition protein MukB from Salmonella agona (strain SL483).